A 299-amino-acid polypeptide reads, in one-letter code: Acetylglutamate kinase (299 aa).

Residues Gly70–Gly71, Arg92, and Asn186 each bind substrate.

Belongs to the acetylglutamate kinase family. ArgB subfamily.

It localises to the cytoplasm. It carries out the reaction N-acetyl-L-glutamate + ATP = N-acetyl-L-glutamyl 5-phosphate + ADP. It participates in amino-acid biosynthesis; L-arginine biosynthesis; N(2)-acetyl-L-ornithine from L-glutamate: step 2/4. Its function is as follows. Catalyzes the ATP-dependent phosphorylation of N-acetyl-L-glutamate. The polypeptide is Acetylglutamate kinase (Caldanaerobacter subterraneus subsp. tengcongensis (strain DSM 15242 / JCM 11007 / NBRC 100824 / MB4) (Thermoanaerobacter tengcongensis)).